The chain runs to 196 residues: dTTP/UTP pyrophosphatase (196 aa).

Residue aspartate 72 is the Proton acceptor of the active site.

Belongs to the Maf family. YhdE subfamily. A divalent metal cation serves as cofactor.

It localises to the cytoplasm. The catalysed reaction is dTTP + H2O = dTMP + diphosphate + H(+). The enzyme catalyses UTP + H2O = UMP + diphosphate + H(+). Its function is as follows. Nucleoside triphosphate pyrophosphatase that hydrolyzes dTTP and UTP. May have a dual role in cell division arrest and in preventing the incorporation of modified nucleotides into cellular nucleic acids. The sequence is that of dTTP/UTP pyrophosphatase from Chlamydia caviae (strain ATCC VR-813 / DSM 19441 / 03DC25 / GPIC) (Chlamydophila caviae).